We begin with the raw amino-acid sequence, 385 residues long: 4-hydroxy-3-methylbut-2-en-1-yl diphosphate synthase (flavodoxin) 2 (385 aa).

The [4Fe-4S] cluster site is built by cysteine 280, cysteine 283, cysteine 315, and glutamate 322.

This sequence belongs to the IspG family. [4Fe-4S] cluster serves as cofactor.

It catalyses the reaction (2E)-4-hydroxy-3-methylbut-2-enyl diphosphate + oxidized [flavodoxin] + H2O + 2 H(+) = 2-C-methyl-D-erythritol 2,4-cyclic diphosphate + reduced [flavodoxin]. It functions in the pathway isoprenoid biosynthesis; isopentenyl diphosphate biosynthesis via DXP pathway; isopentenyl diphosphate from 1-deoxy-D-xylulose 5-phosphate: step 5/6. Its function is as follows. Converts 2C-methyl-D-erythritol 2,4-cyclodiphosphate (ME-2,4cPP) into 1-hydroxy-2-methyl-2-(E)-butenyl 4-diphosphate. This chain is 4-hydroxy-3-methylbut-2-en-1-yl diphosphate synthase (flavodoxin) 2, found in Streptomyces coelicolor (strain ATCC BAA-471 / A3(2) / M145).